We begin with the raw amino-acid sequence, 485 residues long: D-alanine--D-alanyl carrier protein ligase (485 aa).

144-145 (TS) lines the ATP pocket. D-alanine is bound at residue Asp-189. 284–289 (NTYGPT) lines the ATP pocket. Position 293 (Val-293) interacts with D-alanine. ATP-binding residues include Asp-365 and Lys-473. Lys-473 provides a ligand contact to D-alanine.

This sequence belongs to the ATP-dependent AMP-binding enzyme family. DltA subfamily.

It localises to the cytoplasm. The catalysed reaction is holo-[D-alanyl-carrier protein] + D-alanine + ATP = D-alanyl-[D-alanyl-carrier protein] + AMP + diphosphate. It functions in the pathway cell wall biogenesis; lipoteichoic acid biosynthesis. Its function is as follows. Catalyzes the first step in the D-alanylation of lipoteichoic acid (LTA), the activation of D-alanine and its transfer onto the D-alanyl carrier protein (Dcp) DltC. In an ATP-dependent two-step reaction, forms a high energy D-alanyl-AMP intermediate, followed by transfer of the D-alanyl residue as a thiol ester to the phosphopantheinyl prosthetic group of the Dcp. D-alanylation of LTA plays an important role in modulating the properties of the cell wall in Gram-positive bacteria, influencing the net charge of the cell wall. This chain is D-alanine--D-alanyl carrier protein ligase, found in Staphylococcus aureus (strain bovine RF122 / ET3-1).